Reading from the N-terminus, the 519-residue chain is Aldehyde dehydrogenase X, mitochondrial (519 aa).

The transit peptide at 1–19 (MLNARFLVPRLLCLQGRTT) directs the protein to the mitochondrion. K53 is modified (N6-acetyllysine). The residue at position 54 (K54) is an N6-acetyllysine; alternate. K54 bears the N6-succinyllysine; alternate mark. Residue 264-269 (GSTEVG) participates in NAD(+) binding. E287 serves as the catalytic Proton acceptor. C321 acts as the Nucleophile in catalysis. 4 positions are modified to N6-acetyllysine; alternate: K366, K385, K401, and K428. An N6-succinyllysine; alternate mark is found at K366, K385, K401, and K428. Residue K431 is modified to N6-acetyllysine.

This sequence belongs to the aldehyde dehydrogenase family. In terms of assembly, homotetramer.

It localises to the mitochondrion matrix. It catalyses the reaction an aldehyde + NAD(+) + H2O = a carboxylate + NADH + 2 H(+). It participates in alcohol metabolism; ethanol degradation; acetate from ethanol: step 2/2. In terms of biological role, ALDHs play a major role in the detoxification of alcohol-derived acetaldehyde. They are involved in the metabolism of corticosteroids, biogenic amines, neurotransmitters, and lipid peroxidation. This chain is Aldehyde dehydrogenase X, mitochondrial (Aldh1b1), found in Rattus norvegicus (Rat).